The primary structure comprises 479 residues: Aspartyl/glutamyl-tRNA(Asn/Gln) amidotransferase subunit B (479 aa).

The protein belongs to the GatB/GatE family. GatB subfamily. As to quaternary structure, heterotrimer of A, B and C subunits.

It carries out the reaction L-glutamyl-tRNA(Gln) + L-glutamine + ATP + H2O = L-glutaminyl-tRNA(Gln) + L-glutamate + ADP + phosphate + H(+). The enzyme catalyses L-aspartyl-tRNA(Asn) + L-glutamine + ATP + H2O = L-asparaginyl-tRNA(Asn) + L-glutamate + ADP + phosphate + 2 H(+). Its function is as follows. Allows the formation of correctly charged Asn-tRNA(Asn) or Gln-tRNA(Gln) through the transamidation of misacylated Asp-tRNA(Asn) or Glu-tRNA(Gln) in organisms which lack either or both of asparaginyl-tRNA or glutaminyl-tRNA synthetases. The reaction takes place in the presence of glutamine and ATP through an activated phospho-Asp-tRNA(Asn) or phospho-Glu-tRNA(Gln). The protein is Aspartyl/glutamyl-tRNA(Asn/Gln) amidotransferase subunit B of Streptococcus pyogenes serotype M4 (strain MGAS10750).